We begin with the raw amino-acid sequence, 156 residues long: Deoxyuridine 5'-triphosphate nucleotidohydrolase (156 aa).

Substrate is bound by residues 76 to 78, Asn-89, 93 to 95, and Lys-103; these read RSG and TVD.

This sequence belongs to the dUTPase family. The cofactor is Mg(2+).

The enzyme catalyses dUTP + H2O = dUMP + diphosphate + H(+). Its pathway is pyrimidine metabolism; dUMP biosynthesis; dUMP from dCTP (dUTP route): step 2/2. This enzyme is involved in nucleotide metabolism: it produces dUMP, the immediate precursor of thymidine nucleotides and it decreases the intracellular concentration of dUTP so that uracil cannot be incorporated into DNA. The sequence is that of Deoxyuridine 5'-triphosphate nucleotidohydrolase from Rhizobium etli (strain ATCC 51251 / DSM 11541 / JCM 21823 / NBRC 15573 / CFN 42).